The primary structure comprises 287 residues: Very long chain fatty acid elongase 4 (287 aa).

Helical transmembrane passes span isoleucine 33 to methionine 53, proline 64 to valine 84, and phenylalanine 115 to valine 135. Residues histidine 145–histidine 149 carry the HxxHH motif motif. The Nucleophile role is filled by histidine 148. Transmembrane regions (helical) follow at residues leucine 150–phenylalanine 170, threonine 172–methionine 192, isoleucine 199–leucine 219, and leucine 241–tyrosine 261.

The protein belongs to the ELO family.

The protein resides in the membrane. It catalyses the reaction a very-long-chain acyl-CoA + malonyl-CoA + H(+) = a very-long-chain 3-oxoacyl-CoA + CO2 + CoA. Its function is as follows. Involved in the synthesis of fatty acids. Elongates C16:0 and C18:0 fatty acids to C26:0, with C24:0 being the main product. The polypeptide is Very long chain fatty acid elongase 4 (Trypanosoma cruzi (strain CL Brener)).